The following is a 94-amino-acid chain: uncharacterized protein (94 aa).

An N-terminal signal peptide occupies residues 1–19 (MKFSGLILGALALVSGAIA).

Belongs to the protease inhibitor I9 family.

This is an uncharacterized protein from Neurospora crassa (strain ATCC 24698 / 74-OR23-1A / CBS 708.71 / DSM 1257 / FGSC 987).